Reading from the N-terminus, the 416-residue chain is UDP-N-acetylglucosamine 1-carboxyvinyltransferase (416 aa).

22–23 (KN) is a binding site for phosphoenolpyruvate. Position 92 (Arg-92) interacts with UDP-N-acetyl-alpha-D-glucosamine. Cys-116 (proton donor) is an active-site residue. Position 116 is a 2-(S-cysteinyl)pyruvic acid O-phosphothioketal (Cys-116). UDP-N-acetyl-alpha-D-glucosamine-binding positions include 121 to 125 (RPVDQ), Asp-304, and Ile-326.

Belongs to the EPSP synthase family. MurA subfamily.

It localises to the cytoplasm. It catalyses the reaction phosphoenolpyruvate + UDP-N-acetyl-alpha-D-glucosamine = UDP-N-acetyl-3-O-(1-carboxyvinyl)-alpha-D-glucosamine + phosphate. Its pathway is cell wall biogenesis; peptidoglycan biosynthesis. In terms of biological role, cell wall formation. Adds enolpyruvyl to UDP-N-acetylglucosamine. This Cupriavidus necator (strain ATCC 17699 / DSM 428 / KCTC 22496 / NCIMB 10442 / H16 / Stanier 337) (Ralstonia eutropha) protein is UDP-N-acetylglucosamine 1-carboxyvinyltransferase.